A 280-amino-acid polypeptide reads, in one-letter code: Cell division protein SepF (280 aa).

The disordered stretch occupies residues 22–117; that stretch reads DYVDDRAPRA…DDYPEDAYGE (96 aa). Composition is skewed to basic and acidic residues over residues 25–36 and 53–83; these read DDRAPRASERGG and RYGE…GADR.

The protein belongs to the SepF family. As to quaternary structure, homodimer. Interacts with FtsZ.

Its subcellular location is the cytoplasm. In terms of biological role, cell division protein that is part of the divisome complex and is recruited early to the Z-ring. Probably stimulates Z-ring formation, perhaps through the cross-linking of FtsZ protofilaments. Its function overlaps with FtsA. In Nocardia farcinica (strain IFM 10152), this protein is Cell division protein SepF.